We begin with the raw amino-acid sequence, 289 residues long: Pantoate kinase (289 aa).

Belongs to the GHMP kinase family. PoK subfamily.

It catalyses the reaction (R)-pantoate + ATP = (R)-4-phosphopantoate + ADP + H(+). Its pathway is cofactor biosynthesis; coenzyme A biosynthesis. Functionally, phosphorylates (R)-pantoate to form (R)-4-phosphopantoate in the CoA biosynthesis pathway. ATP is the best phosphate donor. Can be replaced with UTP, with lower efficiency. In Methanospirillum hungatei JF-1 (strain ATCC 27890 / DSM 864 / NBRC 100397 / JF-1), this protein is Pantoate kinase.